A 377-amino-acid polypeptide reads, in one-letter code: Progesterone receptor (377 aa).

Residues 1–15 (EASQSPQYSFESLPQ) are modulating, Pro-Rich. The nuclear receptor DNA-binding region spans 16 to 90 (KICLICGDEA…AGMVLGGRKF (75 aa)). 2 NR C4-type zinc fingers span residues 18–38 (CLIC…CGSC) and 54–78 (CAGR…LRKC). Serine 127 is modified (phosphoserine). Positions 130–364 (QDLQLIPPLI…EFPEMMSEVI (235 aa)) constitute an NR LBD domain. The interval 138–377 (LINLLMSIEP…LPKILAGMVK (240 aa)) is AF2; mediates transcriptional activation.

This sequence belongs to the nuclear hormone receptor family. NR3 subfamily. In terms of assembly, interacts with CUEDC2, SMARD1 and with UNC45A. Interacts with PRMT2. Interacts with NCOA2 and NCOA1. Interacts with KLF9. Interacts with GTF2B. Palmitoylated by ZDHHC7 and ZDHHC21. Palmitoylation is required for plasma membrane targeting and for rapid intracellular signaling via ERK and AKT kinases and cAMP generation.

The protein resides in the nucleus. In terms of biological role, the steroid hormones and their receptors are involved in the regulation of eukaryotic gene expression and affect cellular proliferation and differentiation in target tissues. Transcriptional activator of several progesteron-dependent promoters in a variety of cell types. Involved in activation of SRC-dependent MAPK signaling on hormone stimulation. The protein is Progesterone receptor (PGR) of Ovis aries (Sheep).